A 1274-amino-acid chain; its full sequence is Enamelin (1274 aa).

The first 38 residues, 1–38 (MLLLQCRNPTSPPKPCGLVPNVKMSLLVFLGLLGVSAA), serve as a signal peptide directing secretion. Residues 103–115 (PVPNGWQQPPMPN) are compositionally biased toward pro residues. 5 disordered regions span residues 103–413 (PVPN…VGAN), 476–610 (IGAN…NNPN), 668–700 (PFQS…KHFP), 712–734 (LPPL…YGSR), and 753–814 (YIKS…EEMN). Residues 117–127 (PSKTDQTQETA) are compositionally biased toward polar residues. The span at 128–142 (KPNQTNPQEPQPQKQ) shows a compositional bias: low complexity. The N-linked (GlcNAc...) asparagine glycan is linked to Asn-130. Residues 143 to 158 (PLKEPPNEAARAKDDA) are compositionally biased toward basic and acidic residues. The segment covering 174–185 (YPQPPWPIPQRG) has biased composition (pro residues). Phosphoserine is present on residues Ser-196 and Ser-219. Positions 225 to 239 (DYEKPKEKDPPKPED) are enriched in basic and acidic residues. Positions 249-272 (ASTNSTVPDANATQSIPEGGNDTS) are enriched in polar residues. Asn-252, Asn-259, and Asn-269 each carry an N-linked (GlcNAc...) asparagine glycan. A compositionally biased stretch (low complexity) spans 273–287 (PIGNTGPGPNAGNNP). Residue Asn-300 is glycosylated (N-linked (GlcNAc...) asparagine). The span at 318–330 (PNIYENYPYPNYP) shows a compositional bias: low complexity. Composition is skewed to polar residues over residues 331-344 (SERQ…QGPR), 486-503 (SIGT…TNPA), 522-549 (TNPS…QASN), and 565-574 (VTVSHNMKTQ). A compositionally biased stretch (basic and acidic residues) spans 575–587 (NPKEKSLGQKERT). A compositionally biased stretch (polar residues) spans 588–598 (VTPTKDASNPW). Basic and acidic residues predominate over residues 715 to 727 (LKEDYGRQDENLR). The segment covering 753–766 (YIKSNPWDKSSPST) has biased composition (polar residues). The span at 787 to 801 (QYNEEDPIDPNEDES) shows a compositional bias: acidic residues. Asn-1066 is a glycosylation site (N-linked (GlcNAc...) asparagine). Disordered stretches follow at residues 1071 to 1097 (KLTA…PYSG) and 1109 to 1128 (SEAS…DLGG).

Phosphorylated by FAM20C in vitro. As to expression, expressed in developing teeth.

The protein localises to the secreted. The protein resides in the extracellular space. It localises to the extracellular matrix. In terms of biological role, involved in the mineralization and structural organization of enamel. Involved in the extension of enamel during the secretory stage of dental enamel formation. In Mus musculus (Mouse), this protein is Enamelin (Enam).